A 20-amino-acid polypeptide reads, in one-letter code: Cytochrome P450-RR1 (20 aa).

The protein belongs to the cytochrome P450 family. It depends on heme as a cofactor.

Its function is as follows. P450-RRI catalyzes the O-dealkylation of 2-ethoxyphenol and 2-methoxyphenol to produce catechol. The cytochrome binds other ortho-substituted phenols, including 2-ethoxyphenol, 2-methylphenol and 2-chlorophenol. This is Cytochrome P450-RR1 from Rhodococcus rhodochrous.